Reading from the N-terminus, the 833-residue chain is MVYYNHKAIENKWQKFWEDNHTFKTGTASSKPKFYALDMFPYPSGAGLHVGHPEGYTATDILSRFKRAQGYNVLHPMGWDAFGLPAEQYAMDTGHDPADFTAQNIATFKRQIKSLGFSYDWDREINTTDPNYYKWTQWIFTKLYEKGLAYEAEVPVNWVEELGTAIANEEVLPDGTSERGGYPVVRKPMRQWMLKITAYAERLLEDLEDLDWPESIKDMQRNWIGKSTGANVTFKVKDTDEEFTVFTTRPDTLFGATYAVLAPEHDLVDIITTAGQAQAVADYKHQASLKSDLARTDLAKEKTGVWTGAYAINPVNGKEIPIWIADYVLASYGTGAIMAVPAHDERDWEFAKQFNLDIIPVLEGGNVAEAAYTDDGLHINSGFLNGLDKAAAIDKMVTWLETEGVGNKKVTYRLRDWLFSRQRYWGEPIPIIHWEDGTSTALPENELPLVLPVTKDIKPSGTGESPLANLTDWLEVTREDGVKGRRETNTMPQWAGSSWYFLRYIDPHNDQKLADEDLLKQWLPVDVYVGGAEHAVLHLLYARFWHKFLYDLGVVPTKEPFQKLFNQGMILGTSYRDHRGALVATDKVEKRDGSFFNIETDEELEQAPAKMSKSLKNVVNPDDVVEQYGADTLRVYEMFMGPLDASIAWSEEGLEGSRKFLDRVYRLITTKEIAAKNNGHLDKVYNEVVKTVTEHLEAMRFNTAISQLMIFVNAANKEEQLFLDYAKGFIQLLAPFAPHLAEELWQFLTQSGQSITYVAWPSYDESKLVEDEIEIVLQIKGKVRAKVVVSKDSSREDLEKIALANDKIQAEVAGKDIVKVIAVPNKLVNIVIK.

Residues 41–52 carry the 'HIGH' region motif; the sequence is PYPSGAGLHVGH. The 'KMSKS' region motif lies at 610–614; it reads KMSKS. Position 613 (Lys-613) interacts with ATP.

Belongs to the class-I aminoacyl-tRNA synthetase family.

The protein resides in the cytoplasm. It catalyses the reaction tRNA(Leu) + L-leucine + ATP = L-leucyl-tRNA(Leu) + AMP + diphosphate. The sequence is that of Leucine--tRNA ligase from Streptococcus mutans serotype c (strain ATCC 700610 / UA159).